A 641-amino-acid polypeptide reads, in one-letter code: 1-deoxy-D-xylulose-5-phosphate synthase (641 aa).

Residues H79 and 120-122 (AHS) each bind thiamine diphosphate. D151 contributes to the Mg(2+) binding site. Thiamine diphosphate-binding positions include 152-153 (GA), N180, Y290, and E372. N180 is a Mg(2+) binding site.

The protein belongs to the transketolase family. DXPS subfamily. Homodimer. It depends on Mg(2+) as a cofactor. Requires thiamine diphosphate as cofactor.

The catalysed reaction is D-glyceraldehyde 3-phosphate + pyruvate + H(+) = 1-deoxy-D-xylulose 5-phosphate + CO2. Its pathway is metabolic intermediate biosynthesis; 1-deoxy-D-xylulose 5-phosphate biosynthesis; 1-deoxy-D-xylulose 5-phosphate from D-glyceraldehyde 3-phosphate and pyruvate: step 1/1. In terms of biological role, catalyzes the acyloin condensation reaction between C atoms 2 and 3 of pyruvate and glyceraldehyde 3-phosphate to yield 1-deoxy-D-xylulose-5-phosphate (DXP). The sequence is that of 1-deoxy-D-xylulose-5-phosphate synthase from Bradyrhizobium sp. (strain BTAi1 / ATCC BAA-1182).